We begin with the raw amino-acid sequence, 36 residues long: Potassium channel toxin alpha-KTx 16.5 (36 aa).

3 disulfide bridges follow: cysteine 7–cysteine 28, cysteine 13–cysteine 33, and cysteine 17–cysteine 35. The tract at residues 26-33 (GKCQNKQC) is interaction with Ca(2+)-activated K(+) channels.

Belongs to the short scorpion toxin superfamily. Potassium channel inhibitor family. Alpha-KTx 16 subfamily. As to expression, expressed by the venom gland.

It is found in the secreted. Functionally, augments responses to direct muscle stimulation probably by blocking calcium-activated potassium channels. The chain is Potassium channel toxin alpha-KTx 16.5 from Leiurus hebraeus (Hebrew deathstalker scorpion).